We begin with the raw amino-acid sequence, 228 residues long: Ephrin-A5b (228 aa).

The N-terminal stretch at 1–20 (MLQAEMIVFVGVILWMCVFS) is a signal peptide. One can recognise an Ephrin RBD domain in the interval 29–162 (ADRYAVFWNR…KLKVFVRPPN (134 aa)). An N-linked (GlcNAc...) asparagine glycan is attached at Asn-37. 2 disulfide bridges follow: Cys-62–Cys-102 and Cys-90–Cys-151. Over residues 184-198 (LEPRDDTSHEAEPSR) the composition is skewed to basic and acidic residues. Positions 184 to 205 (LEPRDDTSHEAEPSRSDVSTSG) are disordered. The GPI-anchor amidated serine moiety is linked to residue Ser-204. The propeptide at 205–228 (GLRHQTSRPLLALLLLCISLYLLL) is removed in mature form.

This sequence belongs to the ephrin family. In terms of tissue distribution, widespread expression in the embryo.

Its subcellular location is the cell membrane. Cell surface GPI-bound ligand for Eph receptors, a family of receptor tyrosine kinases which are crucial for migration, repulsion and adhesion during neuronal, vascular and epithelial development. Binds promiscuously Eph receptors residing on adjacent cells, leading to contact-dependent bidirectional signaling into neighboring cells. Induces compartmentalized signaling within a caveolae-like membrane microdomain when bound to the extracellular domain of its cognate receptor. This signaling event requires the activity of the Fyn tyrosine kinase. Activates the epha3 receptor to regulate cell-cell adhesion and cytoskeletal organization. With the receptor epha2 may regulate lens fiber cells shape and interactions and be important for lens transparency maintenance. May function actively to stimulate axon fasciculation. Controls axon growth and may be involved in the creation of the retino-tectal map. The chain is Ephrin-A5b (efna5b) from Danio rerio (Zebrafish).